We begin with the raw amino-acid sequence, 296 residues long: Giardin subunit alpha-2 (296 aa).

4 Annexin repeats span residues 2 to 71 (PKLS…MDLF), 73 to 143 (DRHE…MEKW), 153 to 223 (GSPD…AHFA), and 226 to 293 (GMHK…TLWR).

It belongs to the annexin family. Giardin subunit alpha subfamily.

It is found in the cytoplasm. The protein localises to the cytoskeleton. Its function is as follows. Giardins are involved in parasite attachment to the intestinal mucosa and in the cytoskeletal disassembly and reassembly that marks the transition from infectious trophozoite to transmissible cyst. They may interact with other cytoskeletal proteins such as microtubules in the microribbons or crossbridges, to maintain the integrity of the ventral disk. In Giardia intestinalis (Giardia lamblia), this protein is Giardin subunit alpha-2.